The following is a 143-amino-acid chain: 3-dehydroquinate dehydratase (143 aa).

Tyr22 serves as the catalytic Proton acceptor. Asn73, His79, and Asp86 together coordinate substrate. His99 acts as the Proton donor in catalysis. Residues Ile100 to Ser101 and Arg110 contribute to the substrate site.

This sequence belongs to the type-II 3-dehydroquinase family. Homododecamer.

It catalyses the reaction 3-dehydroquinate = 3-dehydroshikimate + H2O. It functions in the pathway metabolic intermediate biosynthesis; chorismate biosynthesis; chorismate from D-erythrose 4-phosphate and phosphoenolpyruvate: step 3/7. Catalyzes a trans-dehydration via an enolate intermediate. This is 3-dehydroquinate dehydratase from Mycolicibacterium paratuberculosis (strain ATCC BAA-968 / K-10) (Mycobacterium paratuberculosis).